A 265-amino-acid polypeptide reads, in one-letter code: Diphthine synthase (265 aa).

S-adenosyl-L-methionine is bound by residues Leu-9, Asp-85, Ile-88, Thr-113–Ala-114, Leu-168, Ala-211, and His-236.

This sequence belongs to the diphthine synthase family. As to quaternary structure, homodimer.

It carries out the reaction 2-[(3S)-amino-3-carboxypropyl]-L-histidyl-[translation elongation factor 2] + 3 S-adenosyl-L-methionine = diphthine-[translation elongation factor 2] + 3 S-adenosyl-L-homocysteine + 3 H(+). The protein operates within protein modification; peptidyl-diphthamide biosynthesis. In terms of biological role, S-adenosyl-L-methionine-dependent methyltransferase that catalyzes the trimethylation of the amino group of the modified target histidine residue in translation elongation factor 2 (EF-2), to form an intermediate called diphthine. The three successive methylation reactions represent the second step of diphthamide biosynthesis. The chain is Diphthine synthase from Halorubrum lacusprofundi (strain ATCC 49239 / DSM 5036 / JCM 8891 / ACAM 34).